The primary structure comprises 364 residues: Bifunctional protein Rv2228c (364 aa).

One can recognise an RNase H type-1 domain in the interval 1-139; sequence MKVVIEADGG…MDAAAQSAAA (139 aa). Mg(2+)-binding residues include Asp8, Glu49, Asp73, and Asp123. Catalysis depends on His172, which acts as the Tele-phosphohistidine intermediate. Glu246 (proton donor/acceptor; for phosphatase activity) is an active-site residue.

This sequence in the N-terminal section; belongs to the RNase H family. In the C-terminal section; belongs to the histidine phosphatase superfamily. In terms of assembly, the N-terminal domain alone is monomeric in solution but associates in the crystal to form a dimer. Mg(2+) serves as cofactor.

It catalyses the reaction Endonucleolytic cleavage to 5'-phosphomonoester.. The enzyme catalyses adenosylcob(III)alamin 5'-phosphate + H2O = adenosylcob(III)alamin + phosphate. It carries out the reaction alpha-ribazole 5'-phosphate + H2O = alpha-ribazole + phosphate. It participates in nucleoside biosynthesis; alpha-ribazole biosynthesis; alpha-ribazole from 5,6-dimethylbenzimidazole: step 2/2. Endonuclease that displays both RNase H activity with a hybrid RNA/DNA substrate as well as double-stranded RNase activity. As the only authenticated RNase HI in M.tuberculosis, probably plays an important role in the physiology of this organism, being likely involved in bacterial replication. Functionally, catalyzes the hydrolysis of the phospho group from alpha-ribazole 5'-phosphate to form alpha-ribazole. May also catalyze the conversion of adenosylcobalamin 5'-phosphate to adenosylcobalamin (vitamin B12). Has a possible role in B12 recycling, but the primary role of the C-terminal domain of this phosphatase enzyme could be phosphate generation to help bacterial survival within the macrophage, which is a phosphate-deprived environment. This Mycobacterium tuberculosis (strain ATCC 25618 / H37Rv) protein is Bifunctional protein Rv2228c.